The chain runs to 294 residues: uncharacterized protein (294 aa).

Belongs to the glycosyltransferase 2 family.

This is an uncharacterized protein from Haemophilus influenzae (strain ATCC 51907 / DSM 11121 / KW20 / Rd).